The primary structure comprises 405 residues: Acetate kinase (405 aa).

Asn7 lines the Mg(2+) pocket. An ATP-binding site is contributed by Lys14. Residue Arg99 participates in substrate binding. Asp156 (proton donor/acceptor) is an active-site residue. 215-219 lines the ATP pocket; the sequence is HLGNG. Glu391 lines the Mg(2+) pocket.

It belongs to the acetokinase family. As to quaternary structure, homodimer. It depends on Mg(2+) as a cofactor. The cofactor is Mn(2+).

It localises to the cytoplasm. It carries out the reaction acetate + ATP = acetyl phosphate + ADP. The protein operates within metabolic intermediate biosynthesis; acetyl-CoA biosynthesis; acetyl-CoA from acetate: step 1/2. In terms of biological role, catalyzes the formation of acetyl phosphate from acetate and ATP. Can also catalyze the reverse reaction. This Trichormus variabilis (strain ATCC 29413 / PCC 7937) (Anabaena variabilis) protein is Acetate kinase.